The primary structure comprises 325 residues: Coiled-coil domain-containing protein 160 (325 aa).

Disordered stretches follow at residues 18 to 45 and 81 to 123; these read SAQD…KGME and ENKR…CSTD. Residues 81–91 show a composition bias toward basic and acidic residues; sequence ENKRNISKNET. Residues 92–123 are compositionally biased toward polar residues; sequence DTNSASYESSNVDVTTEESFNSTEDNSTCSTD. Residues 144 to 288 adopt a coiled-coil conformation; it reads KLCLNLLNEE…SVIKNELRTE (145 aa).

This sequence belongs to the CCDC160 family.

In Homo sapiens (Human), this protein is Coiled-coil domain-containing protein 160 (CCDC160).